A 273-amino-acid chain; its full sequence is DnaJ homolog subfamily C member 27 (273 aa).

GTP is bound by residues 23 to 30 (GNAEVGKS), 71 to 75 (DMAGH), and 134 to 137 (NKVD). The 57-residue stretch at 217 to 273 (DSWDMLGVKPGATREEVNKAYRKLAVLLHPDKCVAPGSEDAFKAVVNARTSLLKNIK) folds into the J domain.

The protein belongs to the small GTPase superfamily. Rab family.

It is found in the nucleus. Functionally, GTPase possibly involved in regulation of the MEK/ERK pathway. The sequence is that of DnaJ homolog subfamily C member 27 (dnajc27) from Danio rerio (Zebrafish).